We begin with the raw amino-acid sequence, 118 residues long: Holo-[acyl-carrier-protein] synthase (118 aa).

Residues Asp-9 and Glu-52 each contribute to the Mg(2+) site.

It belongs to the P-Pant transferase superfamily. AcpS family. The cofactor is Mg(2+).

It localises to the cytoplasm. It catalyses the reaction apo-[ACP] + CoA = holo-[ACP] + adenosine 3',5'-bisphosphate + H(+). Its function is as follows. Transfers the 4'-phosphopantetheine moiety from coenzyme A to a Ser of acyl-carrier-protein. The sequence is that of Holo-[acyl-carrier-protein] synthase from Frankia casuarinae (strain DSM 45818 / CECT 9043 / HFP020203 / CcI3).